The following is a 332-amino-acid chain: DNA-directed RNA polymerase subunit alpha (332 aa).

The interval 1-234 (MTVTANQVLR…DQLSVFGDFT (234 aa)) is alpha N-terminal domain (alpha-NTD). Positions 248–332 (VDPVLLRPID…AGVASHGMLG (85 aa)) are alpha C-terminal domain (alpha-CTD).

The protein belongs to the RNA polymerase alpha chain family. As to quaternary structure, homodimer. The RNAP catalytic core consists of 2 alpha, 1 beta, 1 beta' and 1 omega subunit. When a sigma factor is associated with the core the holoenzyme is formed, which can initiate transcription.

It catalyses the reaction RNA(n) + a ribonucleoside 5'-triphosphate = RNA(n+1) + diphosphate. Its function is as follows. DNA-dependent RNA polymerase catalyzes the transcription of DNA into RNA using the four ribonucleoside triphosphates as substrates. This is DNA-directed RNA polymerase subunit alpha from Stenotrophomonas maltophilia (strain R551-3).